Here is a 302-residue protein sequence, read N- to C-terminus: tRNA pseudouridine synthase B (302 aa).

Residue D47 is the Nucleophile of the active site.

This sequence belongs to the pseudouridine synthase TruB family. Type 1 subfamily.

The catalysed reaction is uridine(55) in tRNA = pseudouridine(55) in tRNA. Functionally, responsible for synthesis of pseudouridine from uracil-55 in the psi GC loop of transfer RNAs. The polypeptide is tRNA pseudouridine synthase B (Methylobacillus flagellatus (strain ATCC 51484 / DSM 6875 / VKM B-1610 / KT)).